The chain runs to 318 residues: Cell growth regulator with EF hand domain protein 1 (318 aa).

The signal sequence occupies residues 1 to 19 (MLPLTMTVLILLLLPTGQA). 2 EF-hand domains span residues 69-104 (SREQ…ALAP) and 114-149 (PVIL…ALRH). Positions 82, 84, 86, 88, 93, 127, 129, 131, and 138 each coordinate Ca(2+). Positions 177–318 (LRQETQEAPG…HIVQVENDEI (142 aa)) are disordered. Basic and acidic residues-rich tracts occupy residues 186–202 (GPRE…RESL) and 223–233 (GEAEGQAEAKG). Repeat copies occupy residues 219–235 (PGPR…KGDA), 236–252 (PGPR…EGDA), and 253–269 (PGPR…EGDA). A 4 X 17 AA approximate tandem repeats of P-G-P-R-G-E-A-G-G-Q-A-E-A-[KR]-G-D-A region spans residues 219–286 (PGPRGEAEGQ…GGQAEARENG (68 aa)). Over residues 235-272 (APGPRGEAGGQAEAEGDAPGPRGEAGGQAEAEGDAPGP) the composition is skewed to low complexity. One copy of the 4; approximate repeat lies at 270–286 (PGPRGEAGGQAEARENG). Residues 281–293 (EARENGEEAKELP) are compositionally biased toward basic and acidic residues.

Post-translationally, probably digested extracellularly by an unknown serine protease generating extremely hydrophobic bioactive peptides.

It localises to the secreted. Mediates cell-cell adhesion in a calcium-dependent manner. Able to inhibit growth in several cell lines. In Homo sapiens (Human), this protein is Cell growth regulator with EF hand domain protein 1.